Consider the following 190-residue polypeptide: FMN reductase (NADH) RutF (190 aa).

Belongs to the non-flavoprotein flavin reductase family. RutF subfamily.

It carries out the reaction FMNH2 + NAD(+) = FMN + NADH + 2 H(+). Its function is as follows. Catalyzes the reduction of FMN to FMNH2 which is used to reduce pyrimidine by RutA via the Rut pathway. The polypeptide is FMN reductase (NADH) RutF (Pantoea ananatis (strain LMG 20103)).